The sequence spans 147 residues: Hemoglobin subunit gamma (147 aa).

A Globin domain is found at 3 to 147 (HFTAEEKAII…VAIALGHKYH (145 aa)). Heme b contacts are provided by H64 and H93.

Belongs to the globin family. As to quaternary structure, heterotetramer of two alpha chains and two gamma chains in fetal hemoglobin (Hb F). In terms of tissue distribution, red blood cells.

Its function is as follows. Gamma chains make up the fetal hemoglobin F, in combination with alpha chains. This Cephalopachus bancanus (Western tarsier) protein is Hemoglobin subunit gamma (HBG).